The sequence spans 274 residues: Probable glycerophosphodiester phosphodiesterase 1 (274 aa).

Residues 12 to 264 enclose the GP-PDE domain; the sequence is PFVVAHRGAS…HHPGRTKAWL (253 aa). The active-site Proton acceptor is the H17. Residues E44 and D46 each contribute to the Ca(2+) site. The Proton donor role is filled by H59. E126 lines the Ca(2+) pocket.

It belongs to the glycerophosphoryl diester phosphodiesterase family. Requires Ca(2+) as cofactor.

It carries out the reaction a sn-glycero-3-phosphodiester + H2O = an alcohol + sn-glycerol 3-phosphate + H(+). Its function is as follows. Glycerophosphodiester phosphodiesterase hydrolyzes glycerophosphodiesters into glycerol-3-phosphate (G3P) and the corresponding alcohol. This Mycobacterium tuberculosis (strain CDC 1551 / Oshkosh) protein is Probable glycerophosphodiester phosphodiesterase 1 (glpQ1).